The primary structure comprises 127 residues: Small ribosomal subunit protein uS12 (127 aa).

Asp89 is subject to 3-methylthioaspartic acid. Positions 102–127 (LDTAGVKDRKQGRSKYGTKRPKEAKK) are disordered. The span at 113 to 127 (GRSKYGTKRPKEAKK) shows a compositional bias: basic residues.

The protein belongs to the universal ribosomal protein uS12 family. As to quaternary structure, part of the 30S ribosomal subunit. Contacts proteins S8 and S17. May interact with IF1 in the 30S initiation complex.

With S4 and S5 plays an important role in translational accuracy. In terms of biological role, interacts with and stabilizes bases of the 16S rRNA that are involved in tRNA selection in the A site and with the mRNA backbone. Located at the interface of the 30S and 50S subunits, it traverses the body of the 30S subunit contacting proteins on the other side and probably holding the rRNA structure together. The combined cluster of proteins S8, S12 and S17 appears to hold together the shoulder and platform of the 30S subunit. The protein is Small ribosomal subunit protein uS12 of Nostoc punctiforme (strain ATCC 29133 / PCC 73102).